The sequence spans 455 residues: UDP-N-acetylmuramoylalanine--D-glutamate ligase (455 aa).

Position 120 to 126 (120 to 126 (GSNGKTT)) interacts with ATP.

This sequence belongs to the MurCDEF family.

The protein localises to the cytoplasm. The enzyme catalyses UDP-N-acetyl-alpha-D-muramoyl-L-alanine + D-glutamate + ATP = UDP-N-acetyl-alpha-D-muramoyl-L-alanyl-D-glutamate + ADP + phosphate + H(+). It participates in cell wall biogenesis; peptidoglycan biosynthesis. Cell wall formation. Catalyzes the addition of glutamate to the nucleotide precursor UDP-N-acetylmuramoyl-L-alanine (UMA). The protein is UDP-N-acetylmuramoylalanine--D-glutamate ligase of Pediococcus pentosaceus (strain ATCC 25745 / CCUG 21536 / LMG 10740 / 183-1w).